The following is a 171-amino-acid chain: Probable chemoreceptor glutamine deamidase CheD 1 (171 aa).

The segment covering 1–18 (MTRTTGAAPDRAAPAAGE) has biased composition (low complexity). Residues 1-23 (MTRTTGAAPDRAAPAAGETPGGG) are disordered.

It belongs to the CheD family.

It catalyses the reaction L-glutaminyl-[protein] + H2O = L-glutamyl-[protein] + NH4(+). Functionally, probably deamidates glutamine residues to glutamate on methyl-accepting chemotaxis receptors (MCPs), playing an important role in chemotaxis. In Anaeromyxobacter dehalogenans (strain 2CP-C), this protein is Probable chemoreceptor glutamine deamidase CheD 1.